Reading from the N-terminus, the 183-residue chain is MSRGNELVFKAKKTSEKISENIHIFANDPSLAFFRVQEHVRKVTPAIFEKRDEVFQLQNNLQGHCYDMEYGIQALRTIEKSESIFENIQEMIKASIFLKQQLKYEESRKKVKKDSTKSSVYKRFSAHLALDLPDLPDFGGVMRETSQRMENMIGPGTATGRTEAQAATSSNPGELQRSYTTLH.

Residues 152–183 form a disordered region; sequence MIGPGTATGRTEAQAATSSNPGELQRSYTTLH. Residues 159–183 are compositionally biased toward polar residues; sequence TGRTEAQAATSSNPGELQRSYTTLH.

The protein belongs to the BORCS8 family.

It localises to the lysosome membrane. In terms of biological role, may participate in the coupling of lysosomes to microtubule plus-end-directed kinesin motor. The protein is BLOC-1-related complex subunit 8 homolog of Drosophila melanogaster (Fruit fly).